We begin with the raw amino-acid sequence, 427 residues long: Adenylosuccinate synthetase (427 aa).

GTP contacts are provided by residues Gly-12–Lys-18 and Gly-40–Thr-42. Asp-13 functions as the Proton acceptor in the catalytic mechanism. 2 residues coordinate Mg(2+): Asp-13 and Gly-40. IMP contacts are provided by residues Asp-13–Lys-16, Asn-38–His-41, Thr-130, Arg-144, Gln-224, Thr-239, and Arg-303. The active-site Proton donor is the His-41. Residue Val-299–Arg-305 coordinates substrate. Residues Arg-305, Lys-331–Asp-333, and Ser-413–Gly-415 each bind GTP.

The protein belongs to the adenylosuccinate synthetase family. As to quaternary structure, homodimer. Requires Mg(2+) as cofactor.

It localises to the cytoplasm. It carries out the reaction IMP + L-aspartate + GTP = N(6)-(1,2-dicarboxyethyl)-AMP + GDP + phosphate + 2 H(+). The protein operates within purine metabolism; AMP biosynthesis via de novo pathway; AMP from IMP: step 1/2. Functionally, plays an important role in the de novo pathway of purine nucleotide biosynthesis. Catalyzes the first committed step in the biosynthesis of AMP from IMP. The protein is Adenylosuccinate synthetase of Clostridium novyi (strain NT).